We begin with the raw amino-acid sequence, 532 residues long: Zinc finger protein 350 (532 aa).

A KRAB domain is found at 8 to 79; sequence ITLEDVAVDF…EDGIHSGACS (72 aa). 8 consecutive C2H2-type zinc fingers follow at residues 206 to 228, 234 to 256, 262 to 284, 290 to 312, 318 to 340, 346 to 368, 374 to 396, and 402 to 424; these read HVCS…QVMH, HRCS…QRTH, YECP…QKTH, YICS…QRIH, YICN…QRFH, FVCS…QRIH, FECS…QRTH, and YGCN…KRIH. The segment covering 427-443 has biased composition (basic and acidic residues); sequence EKQEAAKVENPPAERHS. Residues 427 to 465 are disordered; the sequence is EKQEAAKVENPPAERHSSLHTSDVMQEKNSANGATTQVP. The span at 445–465 shows a compositional bias: polar residues; it reads LHTSDVMQEKNSANGATTQVP.

It belongs to the krueppel C2H2-type zinc-finger protein family. As to quaternary structure, interacts with BRCA1. Interacts with RNF11. In terms of tissue distribution, widely expressed.

The protein localises to the nucleus. It localises to the nucleus matrix. In terms of biological role, transcriptional repressor. Binds to a specific sequence, 5'-GGGxxxCAGxxxTTT-3', within GADD45 intron 3. The chain is Zinc finger protein 350 (ZNF350) from Homo sapiens (Human).